We begin with the raw amino-acid sequence, 97 residues long: uncharacterized protein (97 aa).

This is an uncharacterized protein from Schizosaccharomyces pombe (strain 972 / ATCC 24843) (Fission yeast).